The following is a 266-amino-acid chain: Methylsterol monooxygenase 2-2 (266 aa).

The next 3 membrane-spanning stretches (helical) occupy residues 24–44 (IGSF…FIFL), 71–91 (RLLL…YPVF), and 107–127 (EVSA…YWGH). The region spanning 113–247 (LFYFIIEDFV…FVYMDWIFGT (135 aa)) is the Fatty acid hydroxylase domain. A Histidine box-1 motif is present at residues 127–131 (HRILH). The Histidine box-2 motif lies at 140–144 (HSVHH). Residues 162 to 182 (ILFLGFATIVGPALTGPHLIT) traverse the membrane as a helical segment. The short motif at 219–225 (FHDYHHR) is the Histidine box-3 element.

Belongs to the sterol desaturase family. Fe cation serves as cofactor. As to expression, expressed in shoots, roots, siliques and flowers, and, slightly, in developing seeds.

The protein localises to the endoplasmic reticulum membrane. It catalyses the reaction 4,4-dimethyl-5alpha-cholest-7-en-3beta-ol + 6 Fe(II)-[cytochrome b5] + 3 O2 + 5 H(+) = 4alpha-carboxy-4beta-methyl-5alpha-cholest-7-ene-3beta-ol + 6 Fe(III)-[cytochrome b5] + 4 H2O. The enzyme catalyses 24-methylidenelophenol + 6 Fe(II)-[cytochrome b5] + 3 O2 + 5 H(+) = 4alpha-carboxy-ergosta-7,24(24(1))-dien-3beta-ol + 6 Fe(III)-[cytochrome b5] + 4 H2O. Its function is as follows. Non-heme iron oxygenase involved in sterols biosynthesis by catalyzing the removal of the second methyl group at the C-4 position. 24-ethylidenelophenol and 24-ethyllophenol are the preferred substrates. Together with SMO2-1, required during embryogenesis, probably by maintaining sterols and auxin homeostasis. The polypeptide is Methylsterol monooxygenase 2-2 (Arabidopsis thaliana (Mouse-ear cress)).